A 236-amino-acid polypeptide reads, in one-letter code: MPISVDKAVIARLKVHGETFEILVDPYLARDFKEGKEVPIEEILATPYVFKDAHKGDKASEKEMEKIFGTSDPYEVAKIILRKGEVQLTAQQRREMLEEKKRQIATIIHRHAVDPRTGYPHPVDRILRAMEEVGVRVDIFKDAEAQVQDVIKAIRRILPLRIEMKVIAVKIPSEYVGRAYGEVRKFGRIKKEEWASDGSWLFLIEIPGGVEEEFYEKLNALTKGNAQTKLIERKGL.

The protein belongs to the SDO1/SBDS family.

The chain is Ribosome maturation protein SDO1 homolog from Pyrococcus abyssi (strain GE5 / Orsay).